The chain runs to 471 residues: Adenosylhomocysteinase (471 aa).

Residues Thr60, Asp135, and Glu196 each contribute to the substrate site. 197–199 (TTT) contacts NAD(+). Positions 226 and 230 each coordinate substrate. Residues Asn231, 260–265 (GYGDVG), Glu283, Asn318, 339–341 (IGH), and Asn387 each bind NAD(+).

This sequence belongs to the adenosylhomocysteinase family. The cofactor is NAD(+).

It is found in the cytoplasm. The enzyme catalyses S-adenosyl-L-homocysteine + H2O = L-homocysteine + adenosine. The protein operates within amino-acid biosynthesis; L-homocysteine biosynthesis; L-homocysteine from S-adenosyl-L-homocysteine: step 1/1. May play a key role in the regulation of the intracellular concentration of adenosylhomocysteine. The polypeptide is Adenosylhomocysteinase (Chlorobium phaeovibrioides (strain DSM 265 / 1930) (Prosthecochloris vibrioformis (strain DSM 265))).